The primary structure comprises 130 residues: Small ribosomal subunit protein uS11 (130 aa).

This sequence belongs to the universal ribosomal protein uS11 family. As to quaternary structure, part of the 30S ribosomal subunit. Interacts with proteins S7 and S18. Binds to IF-3.

Its function is as follows. Located on the platform of the 30S subunit, it bridges several disparate RNA helices of the 16S rRNA. Forms part of the Shine-Dalgarno cleft in the 70S ribosome. The sequence is that of Small ribosomal subunit protein uS11 from Shewanella frigidimarina (strain NCIMB 400).